Consider the following 603-residue polypeptide: Coiled-coil domain-containing protein 148 (603 aa).

2 coiled-coil regions span residues 365–429 (LAKD…KKKK) and 461–510 (EQSL…KQVA).

This is Coiled-coil domain-containing protein 148 (CCDC148) from Macaca fascicularis (Crab-eating macaque).